The chain runs to 428 residues: Phosphoribosylamine--glycine ligase (428 aa).

The region spanning 109–316 (KDFLHRHGIP…LVELCLAALD (208 aa)) is the ATP-grasp domain. 135–196 (LRQVGAPVVV…EEFLTGEEAS (62 aa)) provides a ligand contact to ATP. The tract at residues 211–235 (SSQDHKARDDGDRGPNTGGMGAYSP) is disordered. A compositionally biased stretch (basic and acidic residues) spans 213 to 223 (QDHKARDDGDR). The Mg(2+) site is built by Glu-286 and Asn-288.

It belongs to the GARS family. It depends on Mg(2+) as a cofactor. Requires Mn(2+) as cofactor.

The catalysed reaction is 5-phospho-beta-D-ribosylamine + glycine + ATP = N(1)-(5-phospho-beta-D-ribosyl)glycinamide + ADP + phosphate + H(+). It functions in the pathway purine metabolism; IMP biosynthesis via de novo pathway; N(1)-(5-phospho-D-ribosyl)glycinamide from 5-phospho-alpha-D-ribose 1-diphosphate: step 2/2. The chain is Phosphoribosylamine--glycine ligase (purD) from Allochromatium vinosum (strain ATCC 17899 / DSM 180 / NBRC 103801 / NCIMB 10441 / D) (Chromatium vinosum).